A 334-amino-acid chain; its full sequence is DNA-directed RNA polymerase subunit alpha (334 aa).

Residues M1–Q234 are alpha N-terminal domain (alpha-NTD). The segment at I248–G334 is alpha C-terminal domain (alpha-CTD).

It belongs to the RNA polymerase alpha chain family. Homodimer. The RNAP catalytic core consists of 2 alpha, 1 beta, 1 beta' and 1 omega subunit. When a sigma factor is associated with the core the holoenzyme is formed, which can initiate transcription.

It carries out the reaction RNA(n) + a ribonucleoside 5'-triphosphate = RNA(n+1) + diphosphate. Functionally, DNA-dependent RNA polymerase catalyzes the transcription of DNA into RNA using the four ribonucleoside triphosphates as substrates. The sequence is that of DNA-directed RNA polymerase subunit alpha from Thioalkalivibrio sulfidiphilus (strain HL-EbGR7).